Consider the following 241-residue polypeptide: Probable WRKY transcription factor 63 (241 aa).

The segment at 56-79 is disordered; the sequence is NSPNRQPHHESSSRDMAGLVPQRS. Residues 97-165 constitute a DNA-binding region (WRKY); sequence SPNPRLDDGF…YLGQHTCKAF (69 aa).

Belongs to the WRKY group III family.

Its subcellular location is the nucleus. Its function is as follows. Transcription factor. Interacts specifically with the W box (5'-(T)TGAC[CT]-3'), a frequently occurring elicitor-responsive cis-acting element. The chain is Probable WRKY transcription factor 63 (WRKY63) from Arabidopsis thaliana (Mouse-ear cress).